An 82-amino-acid polypeptide reads, in one-letter code: Lysis inhibition accessory protein (82 aa).

It belongs to the T4likevirus lysis inhibition accessory protein rIII family. In terms of assembly, homooligomer. Interacts with holin (via N-terminus).

Functionally, probably binds to the cytoplasmic part of the holin during lysis inhibition and stabilizes the holin-antiholin complex thereby resulting in a robust block of the hole formation. The protein is Lysis inhibition accessory protein (rIII) of Escherichia coli (Bacteriophage T4).